A 203-amino-acid polypeptide reads, in one-letter code: Urease accessory protein UreG (203 aa).

A GTP-binding site is contributed by 10-17 (GPVGAGKT).

Belongs to the SIMIBI class G3E GTPase family. UreG subfamily. In terms of assembly, homodimer. UreD, UreF and UreG form a complex that acts as a GTP-hydrolysis-dependent molecular chaperone, activating the urease apoprotein by helping to assemble the nickel containing metallocenter of UreC. The UreE protein probably delivers the nickel.

Its subcellular location is the cytoplasm. In terms of biological role, facilitates the functional incorporation of the urease nickel metallocenter. This process requires GTP hydrolysis, probably effectuated by UreG. In Micrococcus luteus (strain ATCC 4698 / DSM 20030 / JCM 1464 / CCM 169 / CCUG 5858 / IAM 1056 / NBRC 3333 / NCIMB 9278 / NCTC 2665 / VKM Ac-2230) (Micrococcus lysodeikticus), this protein is Urease accessory protein UreG.